Here is a 342-residue protein sequence, read N- to C-terminus: Putative glycosyltransferases (342 aa).

2 consecutive transmembrane segments (helical) span residues 227–247 and 262–282; these read IFYL…YLII and VIVS…LVGI.

The protein belongs to the glycosyltransferase 2 family.

It localises to the cell membrane. May play only a redundant role in maintaining cell wall viability and bacterial virulence. In Mycobacterium tuberculosis (strain CDC 1551 / Oshkosh), this protein is Putative glycosyltransferases (pimF).